The sequence spans 927 residues: Phosphoenolpyruvate carboxylase (927 aa).

Active-site residues include H160 and K589.

The protein belongs to the PEPCase type 1 family. Mg(2+) serves as cofactor.

The catalysed reaction is oxaloacetate + phosphate = phosphoenolpyruvate + hydrogencarbonate. Its function is as follows. Forms oxaloacetate, a four-carbon dicarboxylic acid source for the tricarboxylic acid cycle. The polypeptide is Phosphoenolpyruvate carboxylase (Rhodopseudomonas palustris (strain BisA53)).